Here is a 333-residue protein sequence, read N- to C-terminus: 4-hydroxyproline 2-epimerase (333 aa).

The active-site Proton acceptor is Cys91. Substrate-binding positions include 92–93 (GH), His225, and Asp250. The active-site Proton donor is Cys254. 255 to 256 (GT) contacts substrate.

It belongs to the proline racemase family.

It carries out the reaction trans-4-hydroxy-L-proline = cis-4-hydroxy-D-proline. Catalyzes the epimerization of trans-4-hydroxy-L-proline (t4LHyp) to cis-4-hydroxy-D-proline (c4DHyp). Is likely involved in a degradation pathway that converts t4LHyp to alpha-ketoglutarate. Displays no proline racemase activity. The sequence is that of 4-hydroxyproline 2-epimerase from Streptosporangium roseum (strain ATCC 12428 / DSM 43021 / JCM 3005 / KCTC 9067 / NCIMB 10171 / NRRL 2505 / NI 9100).